Here is a 325-residue protein sequence, read N- to C-terminus: uncharacterized protein (325 aa).

Composition is skewed to polar residues over residues 1-21 and 29-57; these read MSYQQRANDSMNSAKQYSSSA and EPFSSSGAPQNRNFDTSYTSEIPSNSSRA. The disordered stretch occupies residues 1-325; sequence MSYQQRANDS…LKTGHHSERY (325 aa). The span at 86–109 shows a compositional bias: basic and acidic residues; that stretch reads ESRKKEQSDVRGGDTSYSRRHDDS. Polar residues-rich tracts occupy residues 114–167 and 174–193; these read NKYS…TTQG and YSQSYPTDTYGSRQKATPSD. Composition is skewed to low complexity over residues 200–210 and 252–278; these read YDYSSSGSHTH and ATDTTAEANRRAATGTRNARTTAQRNA. Residues 282–325 show a composition bias toward basic and acidic residues; the sequence is EDEHVSMGDKMKGNMEKMAGKLTRDPELVQKGEDLKTGHHSERY.

This is an uncharacterized protein from Schizosaccharomyces pombe (strain 972 / ATCC 24843) (Fission yeast).